Here is an 83-residue protein sequence, read N- to C-terminus: Putative membrane protein insertion efficiency factor (83 aa).

The disordered stretch occupies residues 63–83 (GGNDPVPDHFSLRRNKTDISD). A compositionally biased stretch (basic and acidic residues) spans 68–83 (VPDHFSLRRNKTDISD).

Belongs to the UPF0161 family.

It is found in the cell membrane. In terms of biological role, could be involved in insertion of integral membrane proteins into the membrane. This chain is Putative membrane protein insertion efficiency factor, found in Streptococcus agalactiae serotype III (strain NEM316).